Reading from the N-terminus, the 238-residue chain is Ribosomal RNA small subunit methyltransferase G (238 aa).

Residues glycine 77, phenylalanine 82, 128-129 (AE), and arginine 147 contribute to the S-adenosyl-L-methionine site.

The protein belongs to the methyltransferase superfamily. RNA methyltransferase RsmG family.

The protein resides in the cytoplasm. Its function is as follows. Specifically methylates the N7 position of guanine in position 535 of 16S rRNA. In Geobacillus kaustophilus (strain HTA426), this protein is Ribosomal RNA small subunit methyltransferase G.